The sequence spans 354 residues: Neutral protease 2 homolog SNOG_02177 (354 aa).

Residues 1 to 19 form the signal peptide; it reads MKFQILSVAALASLASAVS. The propeptide occupies 20–182; that stretch reads DALDKRDSPL…WIDLAKRTIV (163 aa). Disulfide bonds link C186–C257 and C264–C282. N-linked (GlcNAc...) asparagine glycosylation is present at N214. H306 serves as a coordination point for Zn(2+). The active site involves E307. H310 lines the Zn(2+) pocket.

This sequence belongs to the peptidase M35 family. The cofactor is Zn(2+).

The protein resides in the secreted. The enzyme catalyses Preferential cleavage of bonds with hydrophobic residues in P1'. Also 3-Asn-|-Gln-4 and 8-Gly-|-Ser-9 bonds in insulin B chain.. Its function is as follows. Secreted metalloproteinase that allows assimilation of proteinaceous substrates. Shows high activities on basic nuclear substrates such as histone and protamine. The polypeptide is Neutral protease 2 homolog SNOG_02177 (Phaeosphaeria nodorum (strain SN15 / ATCC MYA-4574 / FGSC 10173) (Glume blotch fungus)).